The sequence spans 212 residues: Large ribosomal subunit protein uL3 (212 aa).

Gln153 is modified (N5-methylglutamine).

This sequence belongs to the universal ribosomal protein uL3 family. In terms of assembly, part of the 50S ribosomal subunit. Forms a cluster with proteins L14 and L19. In terms of processing, methylated by PrmB.

One of the primary rRNA binding proteins, it binds directly near the 3'-end of the 23S rRNA, where it nucleates assembly of the 50S subunit. This is Large ribosomal subunit protein uL3 from Shewanella halifaxensis (strain HAW-EB4).